The sequence spans 473 residues: Sulfate adenylyltransferase subunit 1 (473 aa).

The tr-type G domain maps to 19–238; that stretch reads KTLLKFLTCG…IKIKNSISSE (220 aa). Residues 28–35 are G1; sequence GSVDDGKS. A GTP-binding site is contributed by 28-35; it reads GSVDDGKS. The tract at residues 86 to 90 is G2; sequence GITID. Residues 107-110 form a G3 region; the sequence is DTPG. Residues 107–111 and 162–165 contribute to the GTP site; these read DTPGH and NKMD. Residues 162 to 165 form a G4 region; that stretch reads NKMD. Positions 200–202 are G5; that stretch reads SAL.

The protein belongs to the TRAFAC class translation factor GTPase superfamily. Classic translation factor GTPase family. CysN/NodQ subfamily. Heterodimer composed of CysD, the smaller subunit, and CysN.

It catalyses the reaction sulfate + ATP + H(+) = adenosine 5'-phosphosulfate + diphosphate. It participates in sulfur metabolism; hydrogen sulfide biosynthesis; sulfite from sulfate: step 1/3. Functionally, with CysD forms the ATP sulfurylase (ATPS) that catalyzes the adenylation of sulfate producing adenosine 5'-phosphosulfate (APS) and diphosphate, the first enzymatic step in sulfur assimilation pathway. APS synthesis involves the formation of a high-energy phosphoric-sulfuric acid anhydride bond driven by GTP hydrolysis by CysN coupled to ATP hydrolysis by CysD. In Buchnera aphidicola subsp. Acyrthosiphon pisum (strain 5A), this protein is Sulfate adenylyltransferase subunit 1.